The sequence spans 461 residues: Phosphatidate cytidylyltransferase 1 (461 aa).

The interval 1–67 (MLELRHRGSC…IPEIPPSSDR (67 aa)) is disordered. Arg-7 is modified (omega-N-methylarginine). Residues 20 to 56 (PHREGEAAGGDHETESTSDKETDIDDRYGDLDSRTDS) are compositionally biased toward basic and acidic residues. Phosphoserine occurs at positions 35 and 37. 6 helical membrane-spanning segments follow: residues 96-116 (MISLFFLIIYMGSFMLMLLVL), 149-169 (FLLCVNYFFYGETVADYFATF), 183-203 (HRFISFALYLAGFCMFVLSLV), 230-250 (LVIQNLFEGMIWFLVPISSVI), 279-299 (GFIGGFFSTVVFGFIAAYVLS), and 357-377 (IALSTFASLIGPFGGFFASGF).

This sequence belongs to the CDS family. In terms of assembly, homodimer. Interacts with FOS; this interaction may enhance catalytic activity. Requires Mg(2+) as cofactor. Expressed in adult tissues such as placenta, brain, small intestine, ovary, testis and prostate. Highly expressed in fetal kidney, lung and brain. Lower level in fetal liver.

It is found in the endoplasmic reticulum membrane. It catalyses the reaction a 1,2-diacyl-sn-glycero-3-phosphate + CTP + H(+) = a CDP-1,2-diacyl-sn-glycerol + diphosphate. The enzyme catalyses 1-octadecanoyl-2-(5Z,8Z,11Z,14Z-eicosatetraenoyl)-sn-glycero-3-phosphate + CTP + H(+) = 1-octadecanoyl-2-(5Z,8Z,11Z,14Z-eicosatetraenoyl)-sn-glycero-3-cytidine-5'-diphosphate + diphosphate. The catalysed reaction is 1-octadecanoyl-2-(9Z,12Z-octadecadienoyl)-sn-glycero-3-phosphate + CTP + H(+) = 1-octadecanoyl-2-(9Z,12Z-octadecadienoyl)-sn-glycero-3-cytidine-5'-diphosphate + diphosphate. It carries out the reaction 1-hexadecanoyl-2-(5Z,8Z,11Z,14Z-eicosatetraenoyl)-sn-glycero-3-phosphate + CTP + H(+) = 1-hexadecanoyl-2-(5Z,8Z,11Z,14Z-eicosatetraenoyl)-sn-glycero-3-cytidine-5'-diphosphate + diphosphate. It catalyses the reaction 1,2-di-(5Z,8Z,11Z,14Z)-eicosatetraenoyl-sn-glycero-3-phosphate + CTP + H(+) = 1,2-di-(5Z,8Z,11Z,14Z-eicosatetraenoyl)-sn-glycero-3-cytidine-5'-diphosphate + diphosphate. The enzyme catalyses 1-octadecanoyl-2-(9Z-octadecenoyl)-sn-glycero-3-phosphate + CTP + H(+) = 1-octadecanoyl-2-(9Z-octadecenoyl)-sn-glycero-3-cytidine-5'-diphosphate + diphosphate. The catalysed reaction is 1-octadecanoyl-2-(4Z,7Z,10Z,13Z,16Z,19Z-docosahexaenoyl)-sn-glycero-3-phosphate + CTP + H(+) = 1-octadecanoyl-2-(4Z,7Z,10Z,13Z,16Z,19Z-docosahexaenoyl)-sn-glycero-3-cytidine-5'-diphosphate + diphosphate. It carries out the reaction 1,2-di-(9Z,12Z-octadecadienoyl)-sn-glycero-3-phosphate + CTP + H(+) = 1,2-di-(9Z,12Z-octadecadienoyl)-sn-glycero-3-cytidine-5'-diphosphate + diphosphate. It catalyses the reaction 1,2-di-(9Z-octadecenoyl)-sn-glycero-3-phosphate + CTP + H(+) = 1,2-di-(9Z-octadecenoyl)-sn-glycero-3-cytidine-5'-diphosphate + diphosphate. The protein operates within phospholipid metabolism; CDP-diacylglycerol biosynthesis; CDP-diacylglycerol from sn-glycerol 3-phosphate: step 3/3. Inhibited by its anionic phospholipid end products, with phosphatidylinositol-(4,5)- bisphosphate showing the strongest inhibition. In terms of biological role, catalyzes the conversion of phosphatidic acid (PA) to CDP-diacylglycerol (CDP-DAG), an essential intermediate in the synthesis of phosphatidylglycerol, cardiolipin and phosphatidylinositol. Exhibits almost no acyl chain preference for PA, showing no discrimination for the sn-1/sn-2 acyl chain composition of PAs. Plays an important role in regulating the growth of lipid droplets which are storage organelles at the center of lipid and energy homeostasis. Positively regulates the differentiation and development of adipocytes. This Homo sapiens (Human) protein is Phosphatidate cytidylyltransferase 1.